The sequence spans 407 residues: Na(+)-translocating NADH-quinone reductase subunit F (407 aa).

A helical membrane pass occupies residues 4-24 (IILGVFFFTAIVVALVFVILG). The 93-residue stretch at 33–125 (GNVEVLINGE…NMKIHVHEEV (93 aa)) folds into the 2Fe-2S ferredoxin-type domain. Positions 68, 74, 77, and 109 each coordinate [2Fe-2S] cluster. The 142-residue stretch at 128–269 (VKKWECTVRS…SGPFGEFFAR (142 aa)) folds into the FAD-binding FR-type domain.

The protein belongs to the NqrF family. As to quaternary structure, composed of six subunits; NqrA, NqrB, NqrC, NqrD, NqrE and NqrF. [2Fe-2S] cluster is required as a cofactor. It depends on FAD as a cofactor.

It localises to the cell inner membrane. It carries out the reaction a ubiquinone + n Na(+)(in) + NADH + H(+) = a ubiquinol + n Na(+)(out) + NAD(+). NQR complex catalyzes the reduction of ubiquinone-1 to ubiquinol by two successive reactions, coupled with the transport of Na(+) ions from the cytoplasm to the periplasm. The first step is catalyzed by NqrF, which accepts electrons from NADH and reduces ubiquinone-1 to ubisemiquinone by a one-electron transfer pathway. This Methylococcus capsulatus (strain ATCC 33009 / NCIMB 11132 / Bath) protein is Na(+)-translocating NADH-quinone reductase subunit F.